The chain runs to 322 residues: uncharacterized protein (322 aa).

Composition is skewed to basic residues over residues M1–T16 and L43–V61. The segment at M1–T69 is disordered. Residues G261, I281, and L290 each coordinate S-adenosyl-L-methionine.

The protein belongs to the class IV-like SAM-binding methyltransferase superfamily. RNA methyltransferase TrmH family.

This is an uncharacterized protein from Mycobacterium bovis (strain BCG / Pasteur 1173P2).